A 602-amino-acid polypeptide reads, in one-letter code: Probable translation initiation factor IF-2 (602 aa).

Positions 9–229 (LRQPIVVVLG…GLTQNYMKNK (221 aa)) constitute a tr-type G domain. Positions 18–25 (GHVDHGKT) are G1. 18–25 (GHVDHGKT) provides a ligand contact to GTP. The tract at residues 43–47 (EMTQE) is G2. The interval 82 to 85 (DTPG) is G3. Residues 82-86 (DTPGH) and 136-139 (NKID) contribute to the GTP site. The interval 136 to 139 (NKID) is G4. A G5 region spans residues 204–206 (SAK).

It belongs to the TRAFAC class translation factor GTPase superfamily. Classic translation factor GTPase family. IF-2 subfamily.

Its function is as follows. Function in general translation initiation by promoting the binding of the formylmethionine-tRNA to ribosomes. Seems to function along with eIF-2. The sequence is that of Probable translation initiation factor IF-2 (infB) from Sulfolobus acidocaldarius (strain ATCC 33909 / DSM 639 / JCM 8929 / NBRC 15157 / NCIMB 11770).